The following is a 350-amino-acid chain: Protein CONSERVED ONLY IN THE GREEN LINEAGE 160, chloroplastic (350 aa).

A chloroplast-targeting transit peptide spans 1 to 46 (MAILSYISATSTTPPIPQDQSPNSRLPTKIILPNKKPEKWSTGVAP). The span at 7–26 (ISATSTTPPIPQDQSPNSRL) shows a compositional bias: polar residues. The tract at residues 7–58 (ISATSTTPPIPQDQSPNSRLPTKIILPNKKPEKWSTGVAPGEYGGPPTTTKL) is disordered. At Ser117 the chain carries Phosphoserine. The next 4 helical transmembrane spans lie at 213-233 (KNKI…SAYI), 239-259 (IALS…MLGN), 276-296 (ANQP…RWNA), and 304-324 (FMHL…IATF).

Its subcellular location is the plastid. It localises to the chloroplast thylakoid membrane. Its function is as follows. Facilitates the assembly of the membrane proton channel of the chloroplastic F-type ATPase. Specifically required for the efficient assembly and integration of the CF(0) subunit c into the chloroplastic ATPase complex in the thylakoid membrane. The sequence is that of Protein CONSERVED ONLY IN THE GREEN LINEAGE 160, chloroplastic from Arabidopsis thaliana (Mouse-ear cress).